Consider the following 427-residue polypeptide: Tuberculostearic acid methyltransferase UfaA1 (427 aa).

Belongs to the CFA/CMAS family.

The protein operates within lipid metabolism; fatty acid biosynthesis. Its activity is regulated as follows. Inhibited by S-adenosyl-L-homocysteine. Functionally, involved in the biosynthesis of the tuberculostearic acid (10-methylstearic-acid or TSA), a constituent lipid of the mycobacterial cell wall. Catalyzes the transfer of the methyl group from S-adenosyl-L-methionine (SAM) to the double bond of oleic acid in phosphatidylethanolamine or phosphatidylcholine to produce TSA. This Mycobacterium tuberculosis (strain ATCC 25618 / H37Rv) protein is Tuberculostearic acid methyltransferase UfaA1.